The chain runs to 145 residues: I-leader protein (145 aa).

This sequence belongs to the adenoviridae leader protein family.

The protein resides in the host cytoplasm. It localises to the host perinuclear region. The protein is I-leader protein of Human adenovirus C serotype 5 (HAdV-5).